The sequence spans 977 residues: Probable RNA-dependent RNA polymerase 5 (977 aa).

Residues 103–122 (EEMSVDSDAPSPKSLKSEDK) form a disordered region.

This sequence belongs to the RdRP family.

It carries out the reaction RNA(n) + a ribonucleoside 5'-triphosphate = RNA(n+1) + diphosphate. In terms of biological role, probably involved in the RNA silencing pathway and required for the generation of small interfering RNAs (siRNAs). The chain is Probable RNA-dependent RNA polymerase 5 (RDR5) from Arabidopsis thaliana (Mouse-ear cress).